The sequence spans 944 residues: Protein phosphatase 1 regulatory subunit 37 homolog (944 aa).

The disordered stretch occupies residues 42–71 (QQQSHSAATSVRKKTCQDANSSGEDPNGRI). LRR repeat units follow at residues 203–224 (SCVRLNLSFNKQIDMRGWTTIF), 232–255 (SLQMLNLRYTNLNDRSIPALCKMA), 262–282 (SLTCLHLENTQMSGKNLLVLI), 290–311 (GLRELYLGDNGLQPTDGSHIYQ), and 318–338 (SLQLLDLRNNSIGDSGVRHIC). A disordered region spans residues 517-598 (EEGDSGVEKK…KERHQRFVRS (82 aa)). Basic and acidic residues predominate over residues 522–542 (GVEKKDGNECEGEDNKDRQDT). Polar residues-rich tracts occupy residues 543–554 (PAETENGVSSNE) and 567–585 (PESNNNEKSPLMASSSTSK). Residues 586 to 595 (LSRKERHQRF) are compositionally biased toward basic residues.

It belongs to the PPP1R37 family.

This is Protein phosphatase 1 regulatory subunit 37 homolog from Caenorhabditis elegans.